We begin with the raw amino-acid sequence, 651 residues long: MTHFPNLFSEGRIGNLVIRNRIVMPPMATNLANEDGSVSQRLIDYYVARARGGVGLIILENVQVDYPQGKNVACQLRLDDDKYMAGFFELAEAVHSYGAKIFMQIHHAGRQTTPGITEGLQPVAPSPVPCSFLGTQPRELTINEIEEIIQKFVDAAVRAKGAMFDGIELHGAHGYLIGQFMSPRTNRRVDKYGGSFERRMRFPLEIIRRIKEAVGEDYPISFRFSADEFVEGGNTLEEGKQIAKMLEEAGVHVLHVSAGIYESMPTLLEPSRFEQGWRVYLAEEIKKVVNIPVITVGVIREPEFAEKIIAEGRADFVAVGRGLIADPEWPKKAKEGRQNEIRKCISCNIGCIGGRVFQNLRLRCTVNPVAGREGVYSEIKQAPVKKKVVVVGGGPAGMQAAITAAKRGHQVILYEKKQHLGGQLEIASASPGKAKIKWFRDWLEAELSRAGVEVRSGVTADAETIAALSPDYVILATGSEPVTPRIKGAEKENTFVFQAWDVLAGKVSFDKDEEVVVIGGGLVGCETAHYLAEKGAKVTIVEMLSDIAIDMEPISRFDMMQQFTKLGISARTGKVVTEILPRGVAAVGKEGKQDFIRAHKVVLAIGQSPVGNELKKTLEDKGIDVRVIGDAYNVGKIIDAVSSGFQVAWQI.

Gln-104 is an FMN binding site. Tyr-175 functions as the Proton donor in the catalytic mechanism. FMN is bound by residues Arg-223 and 320-321; that span reads GR. Residues Cys-344, Cys-347, Cys-351, and Cys-364 each coordinate [4Fe-4S] cluster. Positions 396, 415, 423, 433, and 460 each coordinate FAD.

In the N-terminal section; belongs to the NADH:flavin oxidoreductase/NADH oxidase family. In terms of assembly, homohexamer. It depends on FMN as a cofactor. FAD is required as a cofactor. [4Fe-4S] cluster serves as cofactor. In terms of processing, the N-terminus is blocked.

It carries out the reaction A + NADH + H(+) = AH2 + NAD(+). Reduces a range of alternative electron acceptors. This is NADH oxidase from Thermoanaerobacter brockii (Thermoanaerobium brockii).